The following is a 525-amino-acid chain: Cytochrome P450 714A2 (525 aa).

The Lumenal portion of the chain corresponds to Met-1–Ser-3. Residues Leu-4 to Gly-24 form a helical; Signal-anchor for type III membrane protein membrane-spanning segment. Topologically, residues Tyr-25–Val-525 are cytoplasmic. Cys-475 serves as a coordination point for heme.

This sequence belongs to the cytochrome P450 family. Heme is required as a cofactor. In terms of tissue distribution, expressed in the shoot apical meristem (SAM) and petioles of young leaves, in the leaf margin and petiole vein of cotyledons, and at low levels in the filaments of developing flowers. Not detected in siliques.

The protein resides in the endoplasmic reticulum membrane. Involved in the inactivation of early gibberellin (GA) intermediates. The polypeptide is Cytochrome P450 714A2 (CYP714A2) (Arabidopsis thaliana (Mouse-ear cress)).